We begin with the raw amino-acid sequence, 110 residues long: Small ubiquitin-related modifier 3 (110 aa).

Residues Lys-5 and Lys-7 each participate in a glycyl lysine isopeptide (Lys-Gly) (interchain with G-Cter in SUMO2) cross-link. A Glycyl lysine isopeptide (Lys-Gly) (interchain with G-Cter in SUMO); alternate cross-link involves residue Lys-11. A Glycyl lysine isopeptide (Lys-Gly) (interchain with G-Cter in SUMO2); alternate cross-link involves residue Lys-11. One can recognise a Ubiquitin-like domain in the interval 15-92; the sequence is DHINLKVAGQ…IDVFQQQTGG (78 aa). A compositionally biased stretch (polar residues) spans 88-101; the sequence is QQTGGSASRGSVPT. Residues 88 to 110 form a disordered region; sequence QQTGGSASRGSVPTPNRCPDLCY. A Glycyl lysine isopeptide (Gly-Lys) (interchain with K-? in acceptor proteins) cross-link involves residue Gly-92. Positions 93–110 are excised as a propeptide; it reads SASRGSVPTPNRCPDLCY.

It belongs to the ubiquitin family. SUMO subfamily. In terms of assembly, interacts with SAE2 and UBE2I. Covalently attached to a number of proteins. Interacts with USP25 (via ts SIM domain); the interaction sumoylates USP25 and inhibits its ubiquitin hydrolyzing activity. Interacts with BMAL1. In terms of processing, polymeric chains can be formed through Lys-11 cross-linking. Post-translationally, cleavage of precursor form by SENP1, SENP2 or SENP5 is necessary for function.

The protein resides in the cytoplasm. Its subcellular location is the nucleus. The protein localises to the PML body. In terms of biological role, ubiquitin-like protein which can be covalently attached to target lysines either as a monomer or as a lysine-linked polymer. Does not seem to be involved in protein degradation and may function as an antagonist of ubiquitin in the degradation process. Plays a role in a number of cellular processes such as nuclear transport, DNA replication and repair, mitosis and signal transduction. Covalent attachment to its substrates requires prior activation by the E1 complex SAE1-SAE2 and linkage to the E2 enzyme UBE2I, and can be promoted by an E3 ligase such as PIAS1-4, RANBP2 or CBX4. Plays a role in the regulation of sumoylation status of SETX. This chain is Small ubiquitin-related modifier 3, found in Mus musculus (Mouse).